The sequence spans 148 residues: Probable histone H2B.1 (148 aa).

Over residues 1–32 (MAPKGEKKPAEKKPAEEKKSTVAEKAPAEKKP) the composition is skewed to basic and acidic residues. Residues 1 to 57 (MAPKGEKKPAEKKPAEEKKSTVAEKAPAEKKPKAGKKLPKEGGSAAGEKKKKRSKKS) form a disordered region. N6-acetyllysine is present on residues Lys-7, Lys-36, and Lys-37. Lys-144 is covalently cross-linked (Glycyl lysine isopeptide (Lys-Gly) (interchain with G-Cter in ubiquitin)).

The protein belongs to the histone H2B family. As to quaternary structure, the nucleosome is a histone octamer containing two molecules each of H2A, H2B, H3 and H4 assembled in one H3-H4 heterotetramer and two H2A-H2B heterodimers. The octamer wraps approximately 147 bp of DNA. In terms of processing, can be acetylated to form H2BK6ac, H2BK33ac and H2BK34ac. Post-translationally, monoubiquitinated to form H2BK143ub1; may give a specific tag for epigenetic transcriptional activation.

The protein localises to the nucleus. The protein resides in the chromosome. Its function is as follows. Core component of nucleosome. Nucleosomes wrap and compact DNA into chromatin, limiting DNA accessibility to the cellular machineries which require DNA as a template. Histones thereby play a central role in transcription regulation, DNA repair, DNA replication and chromosomal stability. DNA accessibility is regulated via a complex set of post-translational modifications of histones, also called histone code, and nucleosome remodeling. The chain is Probable histone H2B.1 from Medicago truncatula (Barrel medic).